We begin with the raw amino-acid sequence, 89 residues long: Small ribosomal subunit protein uS15 (89 aa).

It belongs to the universal ribosomal protein uS15 family. Part of the 30S ribosomal subunit. Forms a bridge to the 50S subunit in the 70S ribosome, contacting the 23S rRNA.

One of the primary rRNA binding proteins, it binds directly to 16S rRNA where it helps nucleate assembly of the platform of the 30S subunit by binding and bridging several RNA helices of the 16S rRNA. Its function is as follows. Forms an intersubunit bridge (bridge B4) with the 23S rRNA of the 50S subunit in the ribosome. The chain is Small ribosomal subunit protein uS15 from Micrococcus luteus (strain ATCC 4698 / DSM 20030 / JCM 1464 / CCM 169 / CCUG 5858 / IAM 1056 / NBRC 3333 / NCIMB 9278 / NCTC 2665 / VKM Ac-2230) (Micrococcus lysodeikticus).